Here is a 254-residue protein sequence, read N- to C-terminus: MTRFRLTVEFDGRPFMGWQRQAHGPSVQQAIEEAITAVTGERAVIHAAGRTDARVHGRAMTAHADIAKPITPFRLKEALNARLRPAPVAILACEPVAGDWHARFSCVGRRYVYRIVNRRAPLTFDAGLAWQVAADLDDQAMHAAAQCLVGRHDFTTFRSAHCQAESPVKTLDRLDVRRSGELIEIEAAARSFLHHQVRSMVGCLALVGRGRWTAADLADALAAADRARLGLNAPPDGLYFMEAVYPAETGETAR.

The active-site Nucleophile is the aspartate 52. Tyrosine 111 contributes to the substrate binding site.

This sequence belongs to the tRNA pseudouridine synthase TruA family. Homodimer.

The catalysed reaction is uridine(38/39/40) in tRNA = pseudouridine(38/39/40) in tRNA. Its function is as follows. Formation of pseudouridine at positions 38, 39 and 40 in the anticodon stem and loop of transfer RNAs. This chain is tRNA pseudouridine synthase A, found in Rhizorhabdus wittichii (strain DSM 6014 / CCUG 31198 / JCM 15750 / NBRC 105917 / EY 4224 / RW1) (Sphingomonas wittichii).